We begin with the raw amino-acid sequence, 350 residues long: Transcription factor MYB102 (350 aa).

HTH myb-type domains are found at residues 9-65 (KNGL…RPDI) and 66-116 (KRGR…RKKL). 2 consecutive DNA-binding regions (H-T-H motif) follow at residues 37–61 (WRTL…TNYL) and 89–112 (WSAI…NTHI).

In terms of tissue distribution, expressed in rosette leaves, cauline leaves and flowers.

It is found in the nucleus. Probable transcription factor that may function in osmotic stress and wounding signaling pathways. Contributes to basal resistance against the herbivore Pieris rapae (white cabbage butterfly) feeding. This chain is Transcription factor MYB102, found in Arabidopsis thaliana (Mouse-ear cress).